Reading from the N-terminus, the 321-residue chain is Malate dehydrogenase (321 aa).

NAD(+)-binding positions include 10–15 (GAGQIG) and Asp-34. Arg-83 and Arg-89 together coordinate substrate. NAD(+)-binding positions include Asn-96 and 119-121 (VTN). Residues Asn-121 and Arg-152 each coordinate substrate. His-176 (proton acceptor) is an active-site residue.

The protein belongs to the LDH/MDH superfamily. MDH type 3 family.

The enzyme catalyses (S)-malate + NAD(+) = oxaloacetate + NADH + H(+). Catalyzes the reversible oxidation of malate to oxaloacetate. The sequence is that of Malate dehydrogenase from Azorhizobium caulinodans (strain ATCC 43989 / DSM 5975 / JCM 20966 / LMG 6465 / NBRC 14845 / NCIMB 13405 / ORS 571).